Reading from the N-terminus, the 197-residue chain is ATP-dependent Clp protease proteolytic subunit (197 aa).

Ser98 (nucleophile) is an active-site residue. The active site involves His123.

The protein belongs to the peptidase S14 family. As to quaternary structure, fourteen ClpP subunits assemble into 2 heptameric rings which stack back to back to give a disk-like structure with a central cavity, resembling the structure of eukaryotic proteasomes.

The protein localises to the cytoplasm. The catalysed reaction is Hydrolysis of proteins to small peptides in the presence of ATP and magnesium. alpha-casein is the usual test substrate. In the absence of ATP, only oligopeptides shorter than five residues are hydrolyzed (such as succinyl-Leu-Tyr-|-NHMec, and Leu-Tyr-Leu-|-Tyr-Trp, in which cleavage of the -Tyr-|-Leu- and -Tyr-|-Trp bonds also occurs).. In terms of biological role, cleaves peptides in various proteins in a process that requires ATP hydrolysis. Has a chymotrypsin-like activity. Plays a major role in the degradation of misfolded proteins. The polypeptide is ATP-dependent Clp protease proteolytic subunit (Natranaerobius thermophilus (strain ATCC BAA-1301 / DSM 18059 / JW/NM-WN-LF)).